Here is a 233-residue protein sequence, read N- to C-terminus: Biosynthetic peptidoglycan transglycosylase (233 aa).

Residues 7-27 form a helical membrane-spanning segment; sequence VFTWLAKLVLGLFFASILSVV.

It belongs to the glycosyltransferase 51 family.

The protein resides in the cell inner membrane. The enzyme catalyses [GlcNAc-(1-&gt;4)-Mur2Ac(oyl-L-Ala-gamma-D-Glu-L-Lys-D-Ala-D-Ala)](n)-di-trans,octa-cis-undecaprenyl diphosphate + beta-D-GlcNAc-(1-&gt;4)-Mur2Ac(oyl-L-Ala-gamma-D-Glu-L-Lys-D-Ala-D-Ala)-di-trans,octa-cis-undecaprenyl diphosphate = [GlcNAc-(1-&gt;4)-Mur2Ac(oyl-L-Ala-gamma-D-Glu-L-Lys-D-Ala-D-Ala)](n+1)-di-trans,octa-cis-undecaprenyl diphosphate + di-trans,octa-cis-undecaprenyl diphosphate + H(+). The protein operates within cell wall biogenesis; peptidoglycan biosynthesis. In terms of biological role, peptidoglycan polymerase that catalyzes glycan chain elongation from lipid-linked precursors. This is Biosynthetic peptidoglycan transglycosylase from Shewanella oneidensis (strain ATCC 700550 / JCM 31522 / CIP 106686 / LMG 19005 / NCIMB 14063 / MR-1).